Reading from the N-terminus, the 312-residue chain is uncharacterized protein (312 aa).

112–118 (LIGLPMV) contributes to the ATP binding site.

It belongs to the MurCDEF family.

This is an uncharacterized protein from Methanothermobacter thermautotrophicus (strain ATCC 29096 / DSM 1053 / JCM 10044 / NBRC 100330 / Delta H) (Methanobacterium thermoautotrophicum).